Here is a 412-residue protein sequence, read N- to C-terminus: Phosphoglycerate kinase, plasmid (412 aa).

Substrate contacts are provided by residues 39–41 (DLN), arginine 55, 78–81 (HLGR), arginine 133, and arginine 166. ATP contacts are provided by residues lysine 217, glutamate 339, and 365–368 (GGDT).

Belongs to the phosphoglycerate kinase family. As to quaternary structure, monomer.

The protein localises to the cytoplasm. It carries out the reaction (2R)-3-phosphoglycerate + ATP = (2R)-3-phospho-glyceroyl phosphate + ADP. It functions in the pathway carbohydrate biosynthesis; Calvin cycle. This chain is Phosphoglycerate kinase, plasmid (cbbKP), found in Cupriavidus necator (strain ATCC 17699 / DSM 428 / KCTC 22496 / NCIMB 10442 / H16 / Stanier 337) (Ralstonia eutropha).